A 388-amino-acid chain; its full sequence is Branched-chain-amino-acid aminotransferase 2, chloroplastic (388 aa).

The transit peptide at methionine 1–threonine 22 directs the protein to the chloroplast. The residue at position 235 (lysine 235) is an N6-(pyridoxal phosphate)lysine.

This sequence belongs to the class-IV pyridoxal-phosphate-dependent aminotransferase family. Pyridoxal 5'-phosphate serves as cofactor.

Its subcellular location is the plastid. The protein localises to the chloroplast. The enzyme catalyses L-leucine + 2-oxoglutarate = 4-methyl-2-oxopentanoate + L-glutamate. It catalyses the reaction L-isoleucine + 2-oxoglutarate = (S)-3-methyl-2-oxopentanoate + L-glutamate. The catalysed reaction is L-valine + 2-oxoglutarate = 3-methyl-2-oxobutanoate + L-glutamate. It functions in the pathway amino-acid biosynthesis; L-isoleucine biosynthesis; L-isoleucine from 2-oxobutanoate: step 4/4. Its pathway is amino-acid biosynthesis; L-leucine biosynthesis; L-leucine from 3-methyl-2-oxobutanoate: step 4/4. The protein operates within amino-acid biosynthesis; L-valine biosynthesis; L-valine from pyruvate: step 4/4. Converts 2-oxo acids to branched-chain amino acids. Shows activity with L-Leu, L-Ile and L-Val as amino donors and 2-oxoglutarate as an amino acceptor, but no activity for D-isomers of Leu, Ile, Val, Asp, Glu or Ala. This Arabidopsis thaliana (Mouse-ear cress) protein is Branched-chain-amino-acid aminotransferase 2, chloroplastic (BCAT2).